A 408-amino-acid chain; its full sequence is Retron Ec48 reverse transcriptase (408 aa).

Residues 43 to 269 enclose the Reverse transcriptase domain; it reads EELKAIAELP…EPIKVHGLRV (227 aa). Mg(2+) contacts are provided by Asp137, Asp216, and Asp217.

Belongs to the bacterial reverse transcriptase family.

The catalysed reaction is DNA(n) + a 2'-deoxyribonucleoside 5'-triphosphate = DNA(n+1) + diphosphate. Reverse transcriptase (RT) component of antiviral defense system retron Ec48, composed of a non-coding RNA (ncRNA), this reverse transcriptase (RT) and the following membrane protein. Expression of this retron confers protection against bacteriophages lambda, T2, T4, T5 and T7. At multiplicity of infection (MOI) of 0.02 cultures grow normally when infected with lambda without collapsing, at MOI 2 cultures enter growth stasis. At MOI 3 cell membranes are permeabilized within 15 minutes of infection but do not lyse, suggesting the phage are not able to finish a replication cycle. Antiviral defense is suppressed by mutations that knockout the lambda gam expression or phage T7 gp5.9 expression; both viral genes inhibit host RecBCD. The Ec48 retron may sense the integrity of the RecBCD enzyme; when RecBCD is perturbed by viral proteins the Ec48 effector (the membrane protein) is activated, leading to abortive infection and bacterial growth arrest. Responsible for synthesis of msDNA-Ec48 (a branched molecule with RNA linked by a 2',5'-phosphodiester bond to ssDNA). The retron transcript serves as primer (from a conserved internal G residue) and template for the reaction, and codes for the RT. This Escherichia coli protein is Retron Ec48 reverse transcriptase.